The sequence spans 231 residues: 5'-methylthioadenosine/S-adenosylhomocysteine nucleosidase (231 aa).

The active-site Proton acceptor is the Glu12. Substrate-binding positions include Gly78, Met153, and 174-175; that span reads ME. The active-site Proton donor is Asp198.

The protein belongs to the PNP/UDP phosphorylase family. MtnN subfamily.

The catalysed reaction is S-adenosyl-L-homocysteine + H2O = S-(5-deoxy-D-ribos-5-yl)-L-homocysteine + adenine. The enzyme catalyses S-methyl-5'-thioadenosine + H2O = 5-(methylsulfanyl)-D-ribose + adenine. It catalyses the reaction 5'-deoxyadenosine + H2O = 5-deoxy-D-ribose + adenine. It participates in amino-acid biosynthesis; L-methionine biosynthesis via salvage pathway; S-methyl-5-thio-alpha-D-ribose 1-phosphate from S-methyl-5'-thioadenosine (hydrolase route): step 1/2. In terms of biological role, catalyzes the irreversible cleavage of the glycosidic bond in both 5'-methylthioadenosine (MTA) and S-adenosylhomocysteine (SAH/AdoHcy) to adenine and the corresponding thioribose, 5'-methylthioribose and S-ribosylhomocysteine, respectively. Also cleaves 5'-deoxyadenosine, a toxic by-product of radical S-adenosylmethionine (SAM) enzymes, into 5-deoxyribose and adenine. This Bacillus cytotoxicus (strain DSM 22905 / CIP 110041 / 391-98 / NVH 391-98) protein is 5'-methylthioadenosine/S-adenosylhomocysteine nucleosidase.